The chain runs to 170 residues: Phosphopantetheine adenylyltransferase (170 aa).

Substrate is bound at residue Thr9. ATP-binding positions include 9–10 and His17; that span reads TF. Substrate-binding residues include Lys41, Leu73, and Arg87. Residues 88–90, Glu98, and 123–129 each bind ATP; these read GLR and YQFISGT.

The protein belongs to the bacterial CoaD family. Homohexamer. Mg(2+) is required as a cofactor.

The protein resides in the cytoplasm. It catalyses the reaction (R)-4'-phosphopantetheine + ATP + H(+) = 3'-dephospho-CoA + diphosphate. The protein operates within cofactor biosynthesis; coenzyme A biosynthesis; CoA from (R)-pantothenate: step 4/5. Functionally, reversibly transfers an adenylyl group from ATP to 4'-phosphopantetheine, yielding dephospho-CoA (dPCoA) and pyrophosphate. In Bordetella petrii (strain ATCC BAA-461 / DSM 12804 / CCUG 43448), this protein is Phosphopantetheine adenylyltransferase.